A 293-amino-acid polypeptide reads, in one-letter code: Diaminopimelate epimerase (293 aa).

Substrate-binding residues include asparagine 17, glutamine 47, and asparagine 67. The active-site Proton donor is the cysteine 76. Substrate is bound by residues 77 to 78, asparagine 164, asparagine 197, and 215 to 216; these read GN and ER. The Proton acceptor role is filled by cysteine 224. Residue 225–226 coordinates substrate; it reads GS.

This sequence belongs to the diaminopimelate epimerase family. Homodimer.

Its subcellular location is the cytoplasm. It carries out the reaction (2S,6S)-2,6-diaminopimelate = meso-2,6-diaminopimelate. Its pathway is amino-acid biosynthesis; L-lysine biosynthesis via DAP pathway; DL-2,6-diaminopimelate from LL-2,6-diaminopimelate: step 1/1. Functionally, catalyzes the stereoinversion of LL-2,6-diaminopimelate (L,L-DAP) to meso-diaminopimelate (meso-DAP), a precursor of L-lysine and an essential component of the bacterial peptidoglycan. This chain is Diaminopimelate epimerase, found in Rhodopseudomonas palustris (strain TIE-1).